Reading from the N-terminus, the 264-residue chain is ECF RNA polymerase sigma factor BldN (264 aa).

Residues 1–87 form a not required for transcription in vitro region; it reads MYPHVGVDAS…PAADSDSARM (87 aa). A disordered region spans residues 64 to 83; the sequence is RSSSSGAAATTHRRPAADSD. Residues 105 to 172 are sigma-70 factor domain-2; that stretch reads LYDQYSDTVY…LVADHFKSSR (68 aa). Residues 129-132 carry the Polymerase core binding motif; that stretch reads DLTS. The tract at residues 204–255 is sigma-70 factor domain-4; the sequence is ALLDAVRRLNPQQQECVTLRFLQGLSVAETARVMGKNEGAIKTLQYRAVRTL.

Belongs to the sigma-70 factor family. ECF subfamily. In terms of processing, two forms of protein exist; a 35 kDa form in early growth and a 28 kDa form seen in later stages (at protein level). In liquid culture the larger form accumulates to higher level than on solid media. The shorter form results from processing just upstream of Met-87; the exact position is unknown. There are 4 possible start codons; mutation of the first prevents protein production while mutation of the other 3 (Val-44, Met-87 and Met-88) permits production of both forms. Introduction of stop codons between the first and second, or second and third possible start codons also prevents protein production, corroborating that the annotated start codon is the correct one.

Functionally, sigma factors are initiation factors that promote the attachment of RNA polymerase to specific initiation sites and are then released. Extracytoplasmic function (ECF) sigma factors are usually held in an inactive form by an anti-sigma factor until released. ECF sigma factor involved in aerial mycelium formation, required for translation from the bldMp1 promoter. Expressed as a preprotein; processing and accumulation of the mature protein starts as aerial mycelium formation and sporulation commence. Activates expression of about 17 genes, including those for rdlA and most of the chaplins (chpA to chpH); chaplin activation is indirect. The polypeptide is ECF RNA polymerase sigma factor BldN (Streptomyces coelicolor (strain ATCC BAA-471 / A3(2) / M145)).